A 434-amino-acid polypeptide reads, in one-letter code: Na(+)/H(+) antiporter NhaA 1 (434 aa).

11 helical membrane passes run 34-54 (GLLL…PWSA), 73-93 (LTLG…VAGL), 111-131 (ALPV…YVLW), 141-161 (GWAI…AVIS), 171-191 (FLLT…ALFY), 194-214 (ELHL…ALLV), 233-253 (VLVH…GFAV), 278-298 (SAGL…VGGF), 313-333 (VVTG…WLLA), 346-366 (WVDV…SLLI), and 380-400 (HVKV…TGVL).

This sequence belongs to the NhaA Na(+)/H(+) (TC 2.A.33) antiporter family.

It localises to the cell membrane. The catalysed reaction is Na(+)(in) + 2 H(+)(out) = Na(+)(out) + 2 H(+)(in). In terms of biological role, na(+)/H(+) antiporter that extrudes sodium in exchange for external protons. This is Na(+)/H(+) antiporter NhaA 1 from Nocardioides sp. (strain ATCC BAA-499 / JS614).